The primary structure comprises 188 residues: UPF0301 protein PD_1276 (188 aa).

It belongs to the UPF0301 (AlgH) family.

This Xylella fastidiosa (strain Temecula1 / ATCC 700964) protein is UPF0301 protein PD_1276.